The primary structure comprises 516 residues: Serine carboxypeptidase II-3 (516 aa).

A signal peptide spans 1-20 (MKCTVVALVLLVAVQCLVLG). The propeptide occupies 21 to 77 (AGPAAAAKARRTRQGDYLNRLRGSPSSRASWESLAAVEEQTTTKAAGRPAPVAAAVE). Cystine bridges form between cysteine 143–cysteine 391, cysteine 300–cysteine 315, and cysteine 339–cysteine 359. N-linked (GlcNAc...) asparagine glycosylation is found at asparagine 194 and asparagine 205. The active site involves serine 236. N-linked (GlcNAc...) asparagine glycosylation is present at asparagine 301. The propeptide at 342-352 (EKLVTPPIAPS) is linker peptide. N-linked (GlcNAc...) asparagine glycosylation occurs at asparagine 380. Active-site residues include aspartate 427 and histidine 484.

The protein belongs to the peptidase S10 family. Carboxypeptidase II is a dimer, where each monomer is composed of two chains linked by a disulfide bond. In terms of processing, the linker peptide is endoproteolytically excised during enzyme maturation.

It carries out the reaction Preferential release of a C-terminal arginine or lysine residue.. The protein is Serine carboxypeptidase II-3 (CXP;2-3) of Hordeum vulgare (Barley).